Here is a 214-residue protein sequence, read N- to C-terminus: Large ribosomal subunit protein uL16-like (214 aa).

This sequence belongs to the universal ribosomal protein uL16 family. Component of the 60S large ribosomal subunit (LSU).

The protein localises to the cytoplasm. Testis-specific component of the ribosome, which is required for the transition from prophase to metaphase in male meiosis I. Compensates for the inactivated X-linked RPL10 paralog during spermatogenesis. The ribosome is a large ribonucleoprotein complex responsible for the synthesis of proteins in the cell. The small ribosomal subunit (SSU) binds messenger RNAs (mRNAs) and translates the encoded message by selecting cognate aminoacyl-transfer RNA (tRNA) molecules. The large subunit (LSU) contains the ribosomal catalytic site termed the peptidyl transferase center (PTC), which catalyzes the formation of peptide bonds, thereby polymerizing the amino acids delivered by tRNAs into a polypeptide chain. The nascent polypeptides leave the ribosome through a tunnel in the LSU and interact with protein factors that function in enzymatic processing, targeting, and the membrane insertion of nascent chains at the exit of the ribosomal tunnel. The sequence is that of Large ribosomal subunit protein uL16-like (RPL10L) from Bos taurus (Bovine).